Consider the following 235-residue polypeptide: tRNA (guanine-N(1)-)-methyltransferase (235 aa).

Residues G112 and 132–137 (IGDYVL) each bind S-adenosyl-L-methionine.

Belongs to the RNA methyltransferase TrmD family. Homodimer.

The protein localises to the cytoplasm. It carries out the reaction guanosine(37) in tRNA + S-adenosyl-L-methionine = N(1)-methylguanosine(37) in tRNA + S-adenosyl-L-homocysteine + H(+). In terms of biological role, specifically methylates guanosine-37 in various tRNAs. The protein is tRNA (guanine-N(1)-)-methyltransferase of Cytophaga hutchinsonii (strain ATCC 33406 / DSM 1761 / CIP 103989 / NBRC 15051 / NCIMB 9469 / D465).